A 228-amino-acid polypeptide reads, in one-letter code: MTDHTLADADEGFDLDSVEIRVLGVLMEKAFVTPDNYPLSVNAIVTGSNQLTGRDPVMNLTETEVQEALDRLIARKLVSKRDQASARVGKYEHLVRLRHSLPPPEQAALATLMLRGAQTAGEIRQRSERMHRFDDIAAVDKVLEHLGEKYPPMVAAVPKAPGTKETRYAHLLGGRQAFVQMGEAVASGYGSGGAVRGRTSELEEEVRRLRDEFDVLRSEFEKFRSQFE.

The protein belongs to the UPF0502 family.

This is UPF0502 protein AZOSEA09860 from Aromatoleum aromaticum (strain DSM 19018 / LMG 30748 / EbN1) (Azoarcus sp. (strain EbN1)).